A 389-amino-acid chain; its full sequence is MPIKSFASRLALSLAICGTAMGQKVNGADYNKPDGGPPAKFFQASSSIPVAAIQAAAAKASKVPSHATYPIGQGSTKSTIHSDWAGFSEGAAFSFIADMDVDCDGLNHGCKGNPDGQKETNWGALSAYEVPFIVIPQEFLDANKGTLKGNAVAAVICATSSNGKMFYGIFGDSNGDSPQVTGEASWLMARTCFPEEDLNGNKGHTAADVTYIVFTGDKAVLPSSALNKNYITNFDTLRSMGDSLVGALAKNLNLGGGGGNPPTTLTTTSIPEPTGGSGSCSWPGHCAGFKNKGATCSSNDDCSDDLACQNGKCASDGSAETCSWEGHCKGATCSSNDDCSDELACISGICSVDNGVETCEWEGHCEGASCSSHDDCDGNLACKNGKCSA.

An N-terminal signal peptide occupies residues 1-22 (MPIKSFASRLALSLAICGTAMG). Residues 280–313 (CSWPGHCAGFKNKGATCSSNDDCSDDLACQNGKC) form an R3-1 repeat. An R3-2 repeat occupies 320–350 (ETCSWEGHCKGATCSSNDDCSDELACISGIC). The stretch at 357–387 (ETCEWEGHCEGASCSSHDDCDGNLACKNGKC) is one R3-3 repeat.

It belongs to the glycosyl hydrolase 75 family.

It is found in the secreted. The catalysed reaction is Endohydrolysis of beta-(1-&gt;4)-linkages between D-glucosamine residues in a partly acetylated chitosan.. Chitosanase catalyzing the endo-type cleavage of chitosan, the deacylated form of chitin. Chitosanase may be crucial in the degradation of the deacetylated portion of chitin in the fungal cell wall. Chitoolisaccharides produced by the hydrolysis of partially N-acetylated chitosan are known to have many biological activities, including antibacterial activity, immune-enhancing effects, and elicitor activity. This chain is Endo-chitosanase C (csnC), found in Aspergillus oryzae (strain ATCC 42149 / RIB 40) (Yellow koji mold).